The sequence spans 81 residues: Alpha-toxin Ac1 (81 aa).

Residues 1 to 17 form the signal peptide; it reads YIVMISLALVVMIGVES. An LCN-type CS-alpha/beta domain is found at 19–80; the sequence is RDGYIVYPNN…PIKDPSQKCT (62 aa). 4 cysteine pairs are disulfide-bonded: Cys-29–Cys-79, Cys-33–Cys-51, Cys-37–Cys-61, and Cys-41–Cys-63.

It belongs to the long (4 C-C) scorpion toxin superfamily. Sodium channel inhibitor family. Alpha subfamily. Expressed by the venom gland.

It is found in the secreted. Alpha toxins bind voltage-independently at site-3 of sodium channels (Nav) and inhibit the inactivation of the activated channels, thereby blocking neuronal transmission. The polypeptide is Alpha-toxin Ac1 (Androctonus crassicauda (Arabian fat-tailed scorpion)).